The following is a 221-amino-acid chain: Probable N-acetyl-alpha-D-glucosaminyl L-malate deacetylase 2 (221 aa).

Zn(2+) is bound by residues H11, D14, and H125.

This sequence belongs to the PIGL family. Requires Zn(2+) as cofactor.

It carries out the reaction (S)-malyl N-acetyl-alpha-D-glucosaminide + H2O = (S)-malyl alpha-D-glucosaminide + acetate. Its function is as follows. Involved in bacillithiol (BSH) biosynthesis. Catalyzes the second step of the pathway, the deacetylation of N-acetylglucosaminylmalate (GlcNAc-Mal) to glucosamine malate (GlcN-Mal). The sequence is that of Probable N-acetyl-alpha-D-glucosaminyl L-malate deacetylase 2 from Bacillus subtilis (strain 168).